A 467-amino-acid chain; its full sequence is Neuromedin-K receptor (467 aa).

Over 1-86 the chain is Extracellular; it reads MDSFAAAETW…TNQFVQPSWR (86 aa). N-linked (GlcNAc...) asparagine glycosylation is found at N23, N50, and N75. A helical transmembrane segment spans residues 87–109; sequence IALWSLAYGVVVAVAVFGNLIVI. The Cytoplasmic portion of the chain corresponds to 110–119; the sequence is WIILAHKRMR. The chain crosses the membrane as a helical span at residues 120–141; that stretch reads TVTNYFLVNLAFSDASMAAFNT. Over 142 to 161 the chain is Extracellular; sequence LVNFIYALHSEWYFGANYCR. C160 and C235 are disulfide-bonded. The chain crosses the membrane as a helical span at residues 162–183; the sequence is FQNFFPITAVFASIYSMTAIAV. Over 184–203 the chain is Cytoplasmic; sequence DRYMAIIDPLKPRLSATATK. Residues 204 to 224 traverse the membrane as a helical segment; that stretch reads IVIGSIWILAFLLALPQCLYS. At 225–247 the chain is on the extracellular side; the sequence is KTKVMPGRTLCYVQWPEGPKQHF. A helical membrane pass occupies residues 248 to 272; the sequence is IYHIIVIILVYCFPLLIMGITYTIV. Residues 273 to 301 lie on the Cytoplasmic side of the membrane; the sequence is GITLWGGEIPGDTCDKYHEQLKAKRKVVK. The chain crosses the membrane as a helical span at residues 302 to 323; it reads MMIIVVVTFAICWLPYHIYFIL. Topologically, residues 324 to 336 are extracellular; it reads TAIYQQLNRWKYI. The helical transmembrane segment at 337-361 threads the bilayer; the sequence is QQVYLASFWLAMSSTMYNPIIYCCL. Residues 362–467 are Cytoplasmic-facing; that stretch reads NKRFRAGFKR…SPYTSMEEYS (106 aa). C376 is lipidated: S-palmitoyl cysteine. The tract at residues 416–467 is disordered; it reads DPSDADNTRSSRKKRATPGDPNFNGCSRRNSKSASTTSSFISSPYTSMEEYS. Low complexity predominate over residues 447-467; sequence KSASTTSSFISSPYTSMEEYS.

The protein belongs to the G-protein coupled receptor 1 family.

Its subcellular location is the cell membrane. This is a receptor for the tachykinin neuropeptide neuromedin-K (neurokinin B). It is associated with G proteins that activate a phosphatidylinositol-calcium second messenger system. This Oryctolagus cuniculus (Rabbit) protein is Neuromedin-K receptor (TACR3).